The primary structure comprises 279 residues: L-ascorbate peroxidase 5, peroxisomal (279 aa).

The active-site Proton acceptor is histidine 39. A disordered region spans residues proline 111–alanine 134. Residue histidine 158 coordinates heme b. Threonine 159, threonine 175, and aspartate 182 together coordinate K(+). Residues alanine 251 to cysteine 271 traverse the membrane as a helical segment. Positions tyrosine 272–lysine 279 match the AKR2A-binding sequence (ABS) required for peroxisome membrane targeting motif.

Belongs to the peroxidase family. Ascorbate peroxidase subfamily. As to quaternary structure, interacts with AKR2A and AKR2B. Heme b is required as a cofactor.

The protein localises to the peroxisome membrane. The catalysed reaction is L-ascorbate + H2O2 = L-dehydroascorbate + 2 H2O. Its function is as follows. Plays a key role in hydrogen peroxide removal. In Arabidopsis thaliana (Mouse-ear cress), this protein is L-ascorbate peroxidase 5, peroxisomal (APX5).